An 811-amino-acid polypeptide reads, in one-letter code: MLLLFHSKRMPVAEAPQVAGGQGDGGDGEEAEPEGMFKACEDSKRKARGYLRLVPLFVLLALLVLASAGVLLWYFLGYKAEVMVSQVYSGSLRVLNRHFSQDLTRRESSAFRSETAKAQKMLKELITSTRLGTYYNSSSVYSFGEGPLTCFFWFILQIPEHRRLMLSPEVVQALLVEELLSTVNSSAAVPYRAEYEVDPEGLVILEASVKDIAALNSTLGCYRYSYVGQGQVLRLKGPDHLASSCLWHLQGPKDLMLKLRLEWTLAECRDRLAMYDVAGPLEKRLITSVYGCSRQEPVVEVLASGAIMAVVWKKGLHSYYDPFVLSVQPVVFQACEVNLTLDNRLDSQGVLSTPYFPSYYSPQTHCSWHLTVPSLDYGLALWFDAYALRRQKYDLPCTQGQWTIQNRRLCGLRILQPYAERIPVVATAGITINFTSQISLTGPGVRVHYGLYNQSDPCPGEFLCSVNGLCVPACDGVKDCPNGLDERNCVCRATFQCKEDSTCISLPKVCDGQPDCLNGSDEEQCQEGVPCGTFTFQCEDRSCVKKPNPQCDGRPDCRDGSDEEHCDCGLQGPSSRIVGGAVSSEGEWPWQASLQVRGRHICGGALIADRWVITAAHCFQEDSMASTVLWTVFLGKVWQNSRWPGEVSFKVSRLLLHPYHEEDSHDYDVALLQLDHPVVRSAAVRPVCLPARSHFFEPGLHCWITGWGALREGGPISNALQKVDVQLIPQDLCSEVYRYQVTPRMLCAGYRKGKKDACQGDSGGPLVCKALSGRWFLAGLVSWGLGCGRPNYFGVYTRITGVISWIQQVVT.

At 1–55 the chain is on the cytoplasmic side; sequence MLLLFHSKRMPVAEAPQVAGGQGDGGDGEEAEPEGMFKACEDSKRKARGYLRLVP. Residues 56-76 form a helical; Signal-anchor for type II membrane protein membrane-spanning segment; sequence LFVLLALLVLASAGVLLWYFL. The Extracellular segment spans residues 77-811; it reads GYKAEVMVSQ…VISWIQQVVT (735 aa). The SEA domain occupies 84–209; it reads VSQVYSGSLR…EGLVILEASV (126 aa). 6 N-linked (GlcNAc...) asparagine glycosylation sites follow: Asn136, Asn184, Asn216, Asn338, Asn433, and Asn453. 2 consecutive CUB domains span residues 213–336 and 335–452; these read AALN…QACE and CEVN…YGLY. Cys335 and Cys366 form a disulfide bridge. LDL-receptor class A domains are found at residues 457-489, 490-526, and 530-567; these read PCPG…ERNC, VCRA…EQCQ, and PCGT…EHCD. Cystine bridges form between Cys458-Cys470, Cys464-Cys480, Cys474-Cys489, Cys491-Cys503, Cys497-Cys516, Cys510-Cys525, Cys531-Cys543, Cys538-Cys557, Cys551-Cys566, and Cys602-Cys618. Asn518 carries N-linked (GlcNAc...) asparagine glycosylation. The region spanning 577 to 811 is the Peptidase S1 domain; sequence IVGGAVSSEG…VISWIQQVVT (235 aa). Active-site charge relay system residues include His617 and Asp668. 3 disulfides stabilise this stretch: Cys702–Cys768, Cys733–Cys747, and Cys758–Cys787. Ser762 acts as the Charge relay system in catalysis.

It belongs to the peptidase S1 family. As to quaternary structure, interacts with HJV. Post-translationally, the single-chain zymogen undergoes autoproteolytic processing. This results in TMPRSS6 shedding from the cell surface and conversion into an activated two-chains form which is released extracellularly. The process involves a trans-activation mechanism that requires TMPRSS6 oligomerization.

The protein localises to the cell membrane. Its function is as follows. Membrane-bound serine protease. Through the cleavage of cell surface hemojuvelin (HJV), a regulator of the expression of the iron absorption-regulating hormone hepicidin/HAMP, plays a role in iron homeostasis. The chain is Transmembrane protease serine 6 (TMPRSS6) from Homo sapiens (Human).